The sequence spans 76 residues: uncharacterized protein (76 aa).

The chain crosses the membrane as a helical span at residues 24–44 (GAIFLVCYPLYCVVCFVSVLC).

The protein resides in the membrane. This is an uncharacterized protein from Schizosaccharomyces pombe (strain 972 / ATCC 24843) (Fission yeast).